The primary structure comprises 276 residues: Pantothenate synthetase (276 aa).

26 to 33 lines the ATP pocket; it reads MGYLHEGH. His-33 acts as the Proton donor in catalysis. (R)-pantoate is bound at residue Gln-57. Gln-57 is a binding site for beta-alanine. Residue 142–145 coordinates ATP; that stretch reads GLKD. A (R)-pantoate-binding site is contributed by Gln-148. Residues Ile-171 and 179–182 each bind ATP; that span reads KSSR.

It belongs to the pantothenate synthetase family. As to quaternary structure, homodimer.

The protein localises to the cytoplasm. It carries out the reaction (R)-pantoate + beta-alanine + ATP = (R)-pantothenate + AMP + diphosphate + H(+). It functions in the pathway cofactor biosynthesis; (R)-pantothenate biosynthesis; (R)-pantothenate from (R)-pantoate and beta-alanine: step 1/1. In terms of biological role, catalyzes the condensation of pantoate with beta-alanine in an ATP-dependent reaction via a pantoyl-adenylate intermediate. This is Pantothenate synthetase from Exiguobacterium sp. (strain ATCC BAA-1283 / AT1b).